A 246-amino-acid chain; its full sequence is UDP-N-acetyl-D-mannosaminuronic acid transferase (246 aa).

It belongs to the glycosyltransferase 26 family.

The catalysed reaction is UDP-N-acetyl-alpha-D-mannosaminouronate + N-acetyl-alpha-D-glucosaminyl-di-trans,octa-cis-undecaprenyl diphosphate = beta-D-ManNAcA-(1-&gt;4)-alpha-D-GlcNAc-di-trans,octa-cis-undecaprenyl diphosphate + UDP + H(+). It participates in bacterial outer membrane biogenesis; enterobacterial common antigen biosynthesis. Functionally, catalyzes the synthesis of Und-PP-GlcNAc-ManNAcA (Lipid II), the second lipid-linked intermediate involved in enterobacterial common antigen (ECA) synthesis. The chain is UDP-N-acetyl-D-mannosaminuronic acid transferase from Salmonella paratyphi A (strain ATCC 9150 / SARB42).